Reading from the N-terminus, the 498-residue chain is Calcium-dependent protein kinase 22 (498 aa).

A lipid anchor (N-myristoyl glycine) is attached at Gly2. A Protein kinase domain is found at 36 to 305; sequence YSFGDELGKG…AADVLEHPWM (270 aa). ATP-binding positions include 42–50 and Lys65; that span reads LGKGNFGTT. The Proton acceptor role is filled by Asp164. Ser204 carries the phosphoserine modification. Positions 309 to 339 are autoinhibitory domain; sequence APDKPIDNVVLSRMKQFRAMNKLKKLALKVI. 4 EF-hand domains span residues 346–381, 382–417, 418–453, and 454–488; these read EEIKGLKTMFENMDMDKSGSITYEELKMGLNRHGSK, LSETEVKQLMEAADVDGNGTIDYIEFISATMHRHRL, ERDEHLYKAFQYFDKDGSGHITKEEVEIAMKEHGMG, and DEANAKDLISEFDKNNDGKIDYEEFCTMMRNGILQ. Positions 359, 361, 363, 365, 370, 395, 397, 399, 401, 406, 431, 433, 435, 437, 442, 466, 468, 470, 472, and 477 each coordinate Ca(2+).

It belongs to the protein kinase superfamily. Ser/Thr protein kinase family. CDPK subfamily.

Its subcellular location is the membrane. The enzyme catalyses L-seryl-[protein] + ATP = O-phospho-L-seryl-[protein] + ADP + H(+). The catalysed reaction is L-threonyl-[protein] + ATP = O-phospho-L-threonyl-[protein] + ADP + H(+). With respect to regulation, activated by calcium. Autophosphorylation may play an important role in the regulation of the kinase activity. May play a role in signal transduction pathways that involve calcium as a second messenger. The polypeptide is Calcium-dependent protein kinase 22 (CPK22) (Arabidopsis thaliana (Mouse-ear cress)).